The sequence spans 608 residues: MKWVTFISLLLLFSSAYSRGVTRREAHQSEIAHRFNDLGEEHFRGLVLVAFSQYLQQCPFEDHVKLVNEVTEFAKGCVADQSAANCEKSLHELLGDKLCTVASLRDKYGEMADCCEKKEPERNECFLQHKDDNPGFGQLVTPEADAMCTAFHENEQRFLGKYLYEIARRHPYFYAPELLYYAEEYKGVFTECCEAADKAACLTPKVDALREKVLASSAKERLKCASLQKFGERAFKAWSVARLSQKFPKAEFAEISKLVTDLAKIHKECCHGDLLECADDRADLAKYICENQDSISTKLKECCGKPVLEKSHCISEVERDELPADLPPLAVDFVEDKEVCKNYQEAKDVFLGTFLYEYSRRHPEYSVSLLLRLAKEYEATLEKCCATDDPPACYAHVFDEFKPLVEEPHNLVKTNCELFEKLGEYGFQNALLVRYTKKVPQVSTPTLVEVSRSLGKVGSKCCTHPEAERLSCAEDYLSVVLNRLCVLHEKTPVSERVTKCCTESLVNRRPCFSALQVDETYVPKEFSAETFTFHADLCTLPEAEKQIKKQSALVELLKHKPKATEEQLKTVMGDFGSFVDKCCAAEDKEACFAEEGPKLVAAAQAALA.

Positions 1–18 (MKWVTFISLLLLFSSAYS) are cleaved as a signal peptide. Positions 19–24 (RGVTRR) are excised as a propeptide. Albumin domains follow at residues 19-210 (RGVT…DALR), 211-403 (EKVL…EFKP), and 404-601 (LVEE…KLVA). H27 contributes to the Cu cation binding site. At S29 the chain carries Phosphoserine. 2 residues coordinate Ca(2+): E30 and D37. A disulfide bond links C77 and C86. S82 and S89 each carry phosphoserine. H91 provides a ligand contact to Zn(2+). 6 disulfides stabilise this stretch: C99–C115, C114–C125, C148–C193, C192–C201, C224–C270, and C269–C277. K229 is modified (N6-succinyllysine). E268 contacts Ca(2+). Residues H271 and D273 each coordinate Zn(2+). Residues D273, E276, D279, and D283 each coordinate Ca(2+). 8 disulfide bridges follow: C289–C303, C302–C313, C340–C385, C384–C393, C416–C462, C461–C472, C485–C501, and C500–C511. Position 443 is a phosphoserine (S443). T444 and T446 each carry phosphothreonine. K460 bears the N6-succinyllysine mark. Position 513 is a phosphoserine (S513). 2 disulfide bridges follow: C538–C583 and C582–C591. K558 is subject to N6-methyllysine. Phosphothreonine is present on T570. K588 is subject to N6-succinyllysine.

It belongs to the ALB/AFP/VDB family. In terms of assembly, interacts with FCGRT; this interaction regulates ALB homeostasis. Interacts with TASOR. In plasma, occurs in a covalently-linked complex with chromophore-bound alpha-1-microglobulin; this interaction does not prevent fatty acid binding to ALB. Post-translationally, phosphorylated by FAM20C in the extracellular medium. Plasma.

It is found in the secreted. Functionally, binds water, Ca(2+), Na(+), K(+), fatty acids, hormones, bilirubin and drugs. Its main function is the regulation of the colloidal osmotic pressure of blood. Major zinc transporter in plasma, typically binds about 80% of all plasma zinc. Major calcium and magnesium transporter in plasma, binds approximately 45% of circulating calcium and magnesium in plasma. Potentially has more than two calcium-binding sites and might additionally bind calcium in a non-specific manner. The shared binding site between zinc and calcium at residue Asp-273 suggests a crosstalk between zinc and calcium transport in the blood. The rank order of affinity is zinc &gt; calcium &gt; magnesium. Binds to the bacterial siderophore enterobactin and inhibits enterobactin-mediated iron uptake of E.coli from ferric transferrin, and may thereby limit the utilization of iron and growth of enteric bacteria such as E.coli. Does not prevent iron uptake by the bacterial siderophore aerobactin. The chain is Albumin (ALB) from Felis catus (Cat).